The sequence spans 150 residues: MRAVVQRVSQASVTISDNIVAQIEKGLLVFLGISKIDQVSDISWMADKIVNLRIFEDDQNKMNRSLLDIMGDMIVVSQFTLYGDCRKGRRPSFTDSATPEKAKVLYDNFLSYLKEKYPINVQQGEFQAHMKVNIVNDGPVTLLLDSQKLF.

The Gly-cisPro motif, important for rejection of L-amino acids signature appears at 138–139 (GP).

This sequence belongs to the DTD family. As to quaternary structure, homodimer.

Its subcellular location is the cytoplasm. The enzyme catalyses glycyl-tRNA(Ala) + H2O = tRNA(Ala) + glycine + H(+). It catalyses the reaction a D-aminoacyl-tRNA + H2O = a tRNA + a D-alpha-amino acid + H(+). Its function is as follows. An aminoacyl-tRNA editing enzyme that deacylates mischarged D-aminoacyl-tRNAs. Also deacylates mischarged glycyl-tRNA(Ala), protecting cells against glycine mischarging by AlaRS. Acts via tRNA-based rather than protein-based catalysis; rejects L-amino acids rather than detecting D-amino acids in the active site. By recycling D-aminoacyl-tRNA to D-amino acids and free tRNA molecules, this enzyme counteracts the toxicity associated with the formation of D-aminoacyl-tRNA entities in vivo and helps enforce protein L-homochirality. The chain is D-aminoacyl-tRNA deacylase from Petrotoga mobilis (strain DSM 10674 / SJ95).